The following is a 270-amino-acid chain: Putative phosphoenolpyruvate synthase regulatory protein (270 aa).

150 to 157 (GVSRCGKT) is an ADP binding site.

This sequence belongs to the pyruvate, phosphate/water dikinase regulatory protein family. PSRP subfamily.

It catalyses the reaction [pyruvate, water dikinase] + ADP = [pyruvate, water dikinase]-phosphate + AMP + H(+). It carries out the reaction [pyruvate, water dikinase]-phosphate + phosphate + H(+) = [pyruvate, water dikinase] + diphosphate. Functionally, bifunctional serine/threonine kinase and phosphorylase involved in the regulation of the phosphoenolpyruvate synthase (PEPS) by catalyzing its phosphorylation/dephosphorylation. This is Putative phosphoenolpyruvate synthase regulatory protein from Shewanella putrefaciens (strain CN-32 / ATCC BAA-453).